The following is a 330-amino-acid chain: DNA-directed RNA polymerase I subunit RPA43 (330 aa).

Residues 251–330 are disordered; the sequence is ADVTDVTPQE…ANFESPKKRQ (80 aa). Residues S306, S318, and S325 each carry the phosphoserine modification. Basic and acidic residues predominate over residues 317–330; it reads HSEEANFESPKKRQ.

This sequence belongs to the eukaryotic RPA43 RNA polymerase subunit family. Component of the RNA polymerase I (Pol I) complex consisting of 13 subunits: a ten-subunit catalytic core composed of POLR1A/RPA1, POLR1B/RPA2, POLR1C/RPAC1, POLR1D/RPAC2, POLR1H/RPA12, POLR2E/RPABC1, POLR2F/RPABC2, POLR2H/RPABC3, POLR2K/RPABC4 and POLR2L/RPABC5; a mobile stalk subunit POLR1F/RPA43 protruding from the core and additional subunits homologous to general transcription factors POLR1E/RPA49 and POLR1G/RPA34. Interacts with RRN3/TIF-IA. Interacts with RRN3/TIF-IA. In terms of tissue distribution, widely expressed.

It is found in the nucleus. Its subcellular location is the nucleolus. Its function is as follows. Component of RNA polymerase I (Pol I), a DNA-dependent RNA polymerase which synthesizes ribosomal RNA precursors using the four ribonucleoside triphosphates as substrates. Through its association with RRN3/TIF-IA may be involved in recruitment of Pol I to rDNA promoters. This chain is DNA-directed RNA polymerase I subunit RPA43, found in Mus musculus (Mouse).